Consider the following 290-residue polypeptide: 2-phosphoglycerate kinase (290 aa).

The 89-residue stretch at 1–89 folds into the ATP-cone domain; it reads MIIVTDSERK…FWRELRRRKV (89 aa).

Belongs to the 2-phosphoglycerate kinase family. The cofactor is a divalent metal cation.

It catalyses the reaction (2R)-2-phosphoglycerate + ATP = (2R)-2,3-bisphosphoglycerate + ADP + H(+). Its pathway is thermoadapter biosynthesis; cyclic 2,3-diphosphoglycerate biosynthesis; cyclic 2,3-diphosphoglycerate from 2-phospho-D-glycerate: step 1/2. Functionally, catalyzes the phosphorylation of 2-phosphoglycerate to 2,3-diphosphoglycerate. Involved in the biosynthesis of cyclic 2,3-bisphosphoglycerate, a thermoprotectant. The sequence is that of 2-phosphoglycerate kinase from Thermococcus kodakarensis (strain ATCC BAA-918 / JCM 12380 / KOD1) (Pyrococcus kodakaraensis (strain KOD1)).